A 361-amino-acid polypeptide reads, in one-letter code: 3-dehydroquinate synthase (361 aa).

NAD(+) is bound by residues 107–111 (GVIGD), 131–132 (TS), Lys144, and Lys153. Zn(2+) contacts are provided by Glu186, His251, and His268.

The protein belongs to the sugar phosphate cyclases superfamily. Dehydroquinate synthase family. NAD(+) serves as cofactor. Co(2+) is required as a cofactor. The cofactor is Zn(2+).

Its subcellular location is the cytoplasm. It carries out the reaction 7-phospho-2-dehydro-3-deoxy-D-arabino-heptonate = 3-dehydroquinate + phosphate. It functions in the pathway metabolic intermediate biosynthesis; chorismate biosynthesis; chorismate from D-erythrose 4-phosphate and phosphoenolpyruvate: step 2/7. Catalyzes the conversion of 3-deoxy-D-arabino-heptulosonate 7-phosphate (DAHP) to dehydroquinate (DHQ). This chain is 3-dehydroquinate synthase, found in Synechocystis sp. (strain ATCC 27184 / PCC 6803 / Kazusa).